Consider the following 439-residue polypeptide: Proline--tRNA ligase (439 aa).

The protein belongs to the class-II aminoacyl-tRNA synthetase family. ProS type 2 subfamily. In terms of assembly, homodimer.

It localises to the cytoplasm. It catalyses the reaction tRNA(Pro) + L-proline + ATP = L-prolyl-tRNA(Pro) + AMP + diphosphate. Functionally, catalyzes the attachment of proline to tRNA(Pro) in a two-step reaction: proline is first activated by ATP to form Pro-AMP and then transferred to the acceptor end of tRNA(Pro). In Phenylobacterium zucineum (strain HLK1), this protein is Proline--tRNA ligase.